The sequence spans 257 residues: Baramicin A1 (257 aa).

An N-terminal signal peptide occupies residues M1–A19. Positions E20–P21 are excised as a propeptide. The residue at position 22 (Q22) is a Pyrrolidone carboxylic acid. Positions G95–Q122 are disordered. Residue N97 is glycosylated (N-linked (GlcNAc...) asparagine). Residues R118 to P121 constitute a propeptide that is removed on maturation. Position 122 is a pyrrolidone carboxylic acid (Q122). The propeptide occupies R145–P148. A Pyrrolidone carboxylic acid modification is found at Q149. Residues R172–P175 constitute a propeptide that is removed on maturation. Residue Q176 is modified to Pyrrolidone carboxylic acid. The propeptide occupies R199–D204. N225 carries an N-linked (GlcNAc...) asparagine glycan.

Proteolytically cleaved. In terms of tissue distribution, hemolymph (at protein level).

The protein resides in the secreted. Its function is as follows. Secreted immune-induced peptides induced by Toll signaling. Has a significant role in resistance to infection by the entomopathogenic fungus B.bassiana R444 and weak antifungal activity against M.rileyi PHP1705. In adult males, activity appears to be important for neuromuscular processes that mediate correct wing posture upon Toll activation. This Drosophila melanogaster (Fruit fly) protein is Baramicin A1.